A 445-amino-acid polypeptide reads, in one-letter code: Phosphoglucosamine mutase (445 aa).

Catalysis depends on serine 101, which acts as the Phosphoserine intermediate. Mg(2+) is bound by residues serine 101, aspartate 240, aspartate 242, and aspartate 244. Serine 101 carries the post-translational modification Phosphoserine.

It belongs to the phosphohexose mutase family. Requires Mg(2+) as cofactor. Activated by phosphorylation.

The enzyme catalyses alpha-D-glucosamine 1-phosphate = D-glucosamine 6-phosphate. Its function is as follows. Catalyzes the conversion of glucosamine-6-phosphate to glucosamine-1-phosphate. The chain is Phosphoglucosamine mutase from Pseudomonas fluorescens (strain SBW25).